The chain runs to 491 residues: N-succinylglutamate 5-semialdehyde dehydrogenase (491 aa).

Position 223–228 (Gly-223–Gly-228) interacts with NAD(+). Catalysis depends on residues Glu-246 and Cys-280.

This sequence belongs to the aldehyde dehydrogenase family. AstD subfamily.

The catalysed reaction is N-succinyl-L-glutamate 5-semialdehyde + NAD(+) + H2O = N-succinyl-L-glutamate + NADH + 2 H(+). Its pathway is amino-acid degradation; L-arginine degradation via AST pathway; L-glutamate and succinate from L-arginine: step 4/5. In terms of biological role, catalyzes the NAD-dependent reduction of succinylglutamate semialdehyde into succinylglutamate. The protein is N-succinylglutamate 5-semialdehyde dehydrogenase of Photorhabdus laumondii subsp. laumondii (strain DSM 15139 / CIP 105565 / TT01) (Photorhabdus luminescens subsp. laumondii).